A 153-amino-acid chain; its full sequence is NAD(P)H-quinone oxidoreductase subunit N (153 aa).

This sequence belongs to the complex I NdhN subunit family. As to quaternary structure, NDH-1 can be composed of about 15 different subunits; different subcomplexes with different compositions have been identified which probably have different functions.

Its subcellular location is the cellular thylakoid membrane. The catalysed reaction is a plastoquinone + NADH + (n+1) H(+)(in) = a plastoquinol + NAD(+) + n H(+)(out). The enzyme catalyses a plastoquinone + NADPH + (n+1) H(+)(in) = a plastoquinol + NADP(+) + n H(+)(out). Its function is as follows. NDH-1 shuttles electrons from an unknown electron donor, via FMN and iron-sulfur (Fe-S) centers, to quinones in the respiratory and/or the photosynthetic chain. The immediate electron acceptor for the enzyme in this species is believed to be plastoquinone. Couples the redox reaction to proton translocation, and thus conserves the redox energy in a proton gradient. Cyanobacterial NDH-1 also plays a role in inorganic carbon-concentration. The polypeptide is NAD(P)H-quinone oxidoreductase subunit N (Prochlorococcus marinus (strain MIT 9303)).